The primary structure comprises 409 residues: N-carbamoyl-L-amino acid amidohydrolase (409 aa).

A divalent metal cation is bound by residues histidine 79, aspartate 90, glutamate 125, and histidine 189. The an N-carbamoyl-L-alpha-amino acid site is built by glutamine 192, histidine 225, asparagine 273, arginine 286, and alanine 355. An involved in dimerization region spans residues 208 to 325 (GIAGLIWVKF…TTERLQEMAP (118 aa)). Residue histidine 380 coordinates a divalent metal cation.

Belongs to the peptidase M20 family. In terms of assembly, homodimer. Requires Mn(2+) as cofactor. Ni(2+) serves as cofactor. It depends on Co(2+) as a cofactor. The cofactor is Fe(2+).

It carries out the reaction an N-carbamoyl-L-alpha-amino acid + H2O + 2 H(+) = an L-alpha-amino acid + NH4(+) + CO2. It catalyses the reaction N-carbamoyl-L-methionine + H2O + 2 H(+) = L-methionine + NH4(+) + CO2. The catalysed reaction is N-acetyl-L-methionine + H2O = L-methionine + acetate. The enzyme catalyses N-carbamoyl-L-alanine + H2O + 2 H(+) = L-alanine + NH4(+) + CO2. It carries out the reaction N-carbamoyl-L-glutamate + H2O + 2 H(+) = L-glutamate + NH4(+) + CO2. It catalyses the reaction N-carbamoylglycine + H2O + 2 H(+) = glycine + NH4(+) + CO2. The catalysed reaction is N-carbamoyl-L-leucine + H2O + 2 H(+) = L-leucine + NH4(+) + CO2. Its function is as follows. Catalyzes the hydrolysis of aliphatic N-carbamoyl-L-alpha-amino acids to free L-alpha-amino acids. Is strictly L-specific since it is inactive toward N-carbamoyl-D-alpha-amino acids. Is not able to use aromatic N-carbamoyl-L-alpha-amino acids like N-carbamoyl-L-tryptophan and N-carbamoyl-L-phenylalanine as substrates, but is also able to hydrolyze N-acetyl-L-methionine. The sequence is that of N-carbamoyl-L-amino acid amidohydrolase from Geobacillus stearothermophilus (Bacillus stearothermophilus).